The chain runs to 202 residues: Twist-related protein 1 (202 aa).

Residues 1–18 show a composition bias toward low complexity; sequence MMQDVSSSPVSPADDSLS. The segment at 1 to 105 is disordered; that stretch reads MMQDVSSSPV…GGGSPQSYEE (105 aa). Basic residues predominate over residues 34–43; that stretch reads RGGRKRRSSR. Gly residues-rich tracts occupy residues 46 to 65 and 80 to 99; these read AGGG…GGDE and GCGG…GGGS. Residues 108–159 enclose the bHLH domain; that stretch reads TQRVMANVRERQRTQSLNEAFAALRKIIPTLPSDKLSKIQTLKLAARYIDFL. A sufficient for transactivation activity region spans residues 161–191; it reads QVLQSDELDSKMASCSYVAHERLSYAFSVWR.

As to quaternary structure, efficient DNA binding requires dimerization with another bHLH protein. Homodimer or heterodimer with E proteins such as TCF3. ID1 binds preferentially to TCF3 but does not interact efficiently with TWIST1 so ID1 levels control the amount of TCF3 available to dimerize with TWIST1 and thus determine the type of dimer formed. In terms of tissue distribution, subset of mesodermal cells.

The protein localises to the nucleus. Acts as a transcriptional regulator. Inhibits myogenesis by sequestrating E proteins, inhibiting trans-activation by MEF2, and inhibiting DNA-binding by MYOD1 through physical interaction. This interaction probably involves the basic domains of both proteins. Also represses expression of pro-inflammatory cytokines such as TNFA and IL1B. Regulates cranial suture patterning and fusion. Activates transcription as a heterodimer with E proteins. Regulates gene expression differentially, depending on dimer composition. Homodimers induce expression of FGFR2 and POSTN while heterodimers repress FGFR2 and POSTN expression and induce THBS1 expression. Heterodimerization is also required for osteoblast differentiation. Represses the activity of the circadian transcriptional activator: NPAS2-BMAL1 heterodimer. The polypeptide is Twist-related protein 1 (TWIST1) (Homo sapiens (Human)).